The following is a 640-amino-acid chain: Probable potassium transport system protein Kup 1 (640 aa).

The next 12 membrane-spanning stretches (helical) occupy residues 24-44 (LGAL…TSPL), 67-87 (IASL…VLFV), 116-136 (VGPL…DGMI), 154-174 (PFFA…LFTI), 186-206 (FGPV…TEVV), 222-242 (TFLF…VLAV), 264-284 (WFAL…ALIL), 296-316 (MLVP…ATVI), 354-374 (IYIP…VVGF), 382-402 (AAYG…ALVV), 411-431 (LWLC…FLGA), and 436-456 (VTQG…LMAT).

This sequence belongs to the HAK/KUP transporter (TC 2.A.72) family.

It localises to the cell inner membrane. It carries out the reaction K(+)(in) + H(+)(in) = K(+)(out) + H(+)(out). Functionally, transport of potassium into the cell. Likely operates as a K(+):H(+) symporter. The sequence is that of Probable potassium transport system protein Kup 1 from Paramagnetospirillum magneticum (strain ATCC 700264 / AMB-1) (Magnetospirillum magneticum).